A 330-amino-acid polypeptide reads, in one-letter code: AH receptor-interacting protein (330 aa).

Ser43 is subject to Phosphoserine. Residues 54 to 146 (RVRGKPMELI…DLDALQQNPQ (93 aa)) enclose the PPIase FKBP-type domain. 3 TPR repeats span residues 179–212 (VPLI…LKNL), 231–264 (TPLL…YDDN), and 265–298 (VKAY…DPAL).

As to quaternary structure, interacts with RET in the pituitary gland; this interaction prevents the formation of the AIP-survivin complex.

The protein resides in the cytoplasm. In terms of biological role, may play a positive role in AHR-mediated (aromatic hydrocarbon receptor) signaling, possibly by influencing its receptivity for ligand and/or its nuclear targeting. Cellular negative regulator of the hepatitis B virus (HBV) X protein. In Chlorocebus aethiops (Green monkey), this protein is AH receptor-interacting protein (AIP).